A 262-amino-acid chain; its full sequence is Phosphate import ATP-binding protein PstB (262 aa).

Residues 16–257 enclose the ABC transporter domain; the sequence is IDVRNLNFYY…PHRKETEDYI (242 aa). 48–55 provides a ligand contact to ATP; it reads GPSGCGKS.

Belongs to the ABC transporter superfamily. Phosphate importer (TC 3.A.1.7) family. As to quaternary structure, the complex is composed of two ATP-binding proteins (PstB), two transmembrane proteins (PstC and PstA) and a solute-binding protein (PstS).

It localises to the cell inner membrane. It catalyses the reaction phosphate(out) + ATP + H2O = ADP + 2 phosphate(in) + H(+). Functionally, part of the ABC transporter complex PstSACB involved in phosphate import. Responsible for energy coupling to the transport system. This chain is Phosphate import ATP-binding protein PstB, found in Cupriavidus pinatubonensis (strain JMP 134 / LMG 1197) (Cupriavidus necator (strain JMP 134)).